Here is a 175-residue protein sequence, read N- to C-terminus: Endothelin-2 (175 aa).

The first 21 residues, 1-21 (MVSAWCSIALALLLALHEGKG), serve as a signal peptide directing secretion. Positions 22–43 (QAAATLEQPASAPKGRGPHLRF) are excised as a propeptide. Disulfide bonds link Cys46-Cys60 and Cys48-Cys56. Residues 67–175 (VNTAGQTAPY…IPAYSRWRKR (109 aa)) constitute a propeptide that is removed on maturation. Residues 93 to 108 (CECSTAGDSACATFCH) form an endothelin-like region.

It belongs to the endothelin/sarafotoxin family.

The protein localises to the secreted. In terms of biological role, vasoconstrictor. The polypeptide is Endothelin-2 (Edn2) (Mus musculus (Mouse)).